The sequence spans 411 residues: Serpin A12 (411 aa).

Residues 1–20 (MNLVLGLGLFLAGLLTVKGL) form the signal peptide. N-linked (GlcNAc...) asparagine glycosylation is found at Asn-92 and Asn-267. The segment at 364–382 (GTEGAAGSGAQTLPMETPR) is reactive center loop.

This sequence belongs to the serpin family. As to quaternary structure, forms a stable complex with KLK7. In terms of processing, glycosylation slightly decreases affinity for heparin, but otherwise has no significant effect on KLK7 inhibitory activity or thermal stability of the protein. As to expression, expressed in visceral adipose tissues.

It localises to the secreted. Inhibition of KLK7 is enhanced by heparin. In terms of biological role, adipokine that modulates insulin action by specifically inhibiting its target protease KLK7 in white adipose tissues. The polypeptide is Serpin A12 (Serpina12) (Rattus norvegicus (Rat)).